The sequence spans 103 residues: Small ribosomal subunit protein uS10 (103 aa).

This sequence belongs to the universal ribosomal protein uS10 family. In terms of assembly, part of the 30S ribosomal subunit.

Involved in the binding of tRNA to the ribosomes. The chain is Small ribosomal subunit protein uS10 from Borreliella burgdorferi (strain ATCC 35210 / DSM 4680 / CIP 102532 / B31) (Borrelia burgdorferi).